The sequence spans 363 residues: 3-dehydroquinate synthase (363 aa).

Residues 72–77, 130–131, K142, and K151 contribute to the NAD(+) site; these read SGEKEK and TT. Zn(2+)-binding residues include E184, H247, and H264.

It belongs to the sugar phosphate cyclases superfamily. Dehydroquinate synthase family. Co(2+) serves as cofactor. Zn(2+) is required as a cofactor. It depends on NAD(+) as a cofactor.

It is found in the cytoplasm. The catalysed reaction is 7-phospho-2-dehydro-3-deoxy-D-arabino-heptonate = 3-dehydroquinate + phosphate. Its pathway is metabolic intermediate biosynthesis; chorismate biosynthesis; chorismate from D-erythrose 4-phosphate and phosphoenolpyruvate: step 2/7. Functionally, catalyzes the conversion of 3-deoxy-D-arabino-heptulosonate 7-phosphate (DAHP) to dehydroquinate (DHQ). The chain is 3-dehydroquinate synthase from Bacillus thuringiensis subsp. konkukian (strain 97-27).